We begin with the raw amino-acid sequence, 324 residues long: Clavaminate synthase 1 (324 aa).

Residues histidine 144, glutamate 146, and histidine 279 each coordinate Fe cation. Arginine 293 contributes to the 2-oxoglutarate binding site.

It belongs to the clavaminate synthase family. Fe(2+) serves as cofactor.

The enzyme catalyses deoxyamidinoproclavaminate + 2-oxoglutarate + O2 = amidinoproclavaminate + succinate + CO2. It carries out the reaction proclavaminate + 2-oxoglutarate + O2 = dihydroclavaminate + succinate + CO2 + H2O. It catalyses the reaction dihydroclavaminate + 2-oxoglutarate + O2 = clavaminate + succinate + CO2 + H2O. The protein operates within antibiotic biosynthesis; clavulanate biosynthesis; clavulanate from D-glyceraldehyde 3-phosphate and L-arginine: step 3/8. It participates in antibiotic biosynthesis; clavulanate biosynthesis; clavulanate from D-glyceraldehyde 3-phosphate and L-arginine: step 5/8. It functions in the pathway antibiotic biosynthesis; clavulanate biosynthesis; clavulanate from D-glyceraldehyde 3-phosphate and L-arginine: step 6/8. The sequence is that of Clavaminate synthase 1 (cs1) from Streptomyces clavuligerus.